The chain runs to 451 residues: Bifunctional protein GlmU (451 aa).

The pyrophosphorylase stretch occupies residues 1 to 225; it reads MVVVAILAAG…YQEILGINDR (225 aa). UDP-N-acetyl-alpha-D-glucosamine is bound by residues 7–10, K21, Q72, and 77–78; these read LAAG and GT. D102 lines the Mg(2+) pocket. G139, E154, N169, and N223 together coordinate UDP-N-acetyl-alpha-D-glucosamine. Position 223 (N223) interacts with Mg(2+). The segment at 226 to 246 is linker; that stretch reads LQLATAYEILQRRVKEQWMMA. The interval 247–451 is N-acetyltransferase; the sequence is GVTLIDPNSI…PGWRKKSGES (205 aa). Positions 328 and 346 each coordinate UDP-N-acetyl-alpha-D-glucosamine. The active-site Proton acceptor is H358. Residues Y361 and N372 each contribute to the UDP-N-acetyl-alpha-D-glucosamine site. Residues A375, 381 to 382, S400, A418, and R435 each bind acetyl-CoA; that span reads NY.

This sequence in the N-terminal section; belongs to the N-acetylglucosamine-1-phosphate uridyltransferase family. The protein in the C-terminal section; belongs to the transferase hexapeptide repeat family. Homotrimer. Mg(2+) is required as a cofactor.

The protein resides in the cytoplasm. The catalysed reaction is alpha-D-glucosamine 1-phosphate + acetyl-CoA = N-acetyl-alpha-D-glucosamine 1-phosphate + CoA + H(+). It carries out the reaction N-acetyl-alpha-D-glucosamine 1-phosphate + UTP + H(+) = UDP-N-acetyl-alpha-D-glucosamine + diphosphate. The protein operates within nucleotide-sugar biosynthesis; UDP-N-acetyl-alpha-D-glucosamine biosynthesis; N-acetyl-alpha-D-glucosamine 1-phosphate from alpha-D-glucosamine 6-phosphate (route II): step 2/2. It participates in nucleotide-sugar biosynthesis; UDP-N-acetyl-alpha-D-glucosamine biosynthesis; UDP-N-acetyl-alpha-D-glucosamine from N-acetyl-alpha-D-glucosamine 1-phosphate: step 1/1. Its pathway is bacterial outer membrane biogenesis; LPS lipid A biosynthesis. Its function is as follows. Catalyzes the last two sequential reactions in the de novo biosynthetic pathway for UDP-N-acetylglucosamine (UDP-GlcNAc). The C-terminal domain catalyzes the transfer of acetyl group from acetyl coenzyme A to glucosamine-1-phosphate (GlcN-1-P) to produce N-acetylglucosamine-1-phosphate (GlcNAc-1-P), which is converted into UDP-GlcNAc by the transfer of uridine 5-monophosphate (from uridine 5-triphosphate), a reaction catalyzed by the N-terminal domain. This Trichormus variabilis (strain ATCC 29413 / PCC 7937) (Anabaena variabilis) protein is Bifunctional protein GlmU.